The primary structure comprises 478 residues: Proline--tRNA ligase (478 aa).

This sequence belongs to the class-II aminoacyl-tRNA synthetase family. ProS type 3 subfamily. As to quaternary structure, homodimer.

The protein resides in the cytoplasm. The enzyme catalyses tRNA(Pro) + L-proline + ATP = L-prolyl-tRNA(Pro) + AMP + diphosphate. Its function is as follows. Catalyzes the attachment of proline to tRNA(Pro) in a two-step reaction: proline is first activated by ATP to form Pro-AMP and then transferred to the acceptor end of tRNA(Pro). The sequence is that of Proline--tRNA ligase from Clostridium botulinum (strain Kyoto / Type A2).